The following is a 1196-amino-acid chain: DNA-directed RNA polymerase subunit beta (1196 aa).

Positions 1152–1165 (EEEIEMRDLEDEED) are enriched in acidic residues. The interval 1152–1196 (EEEIEMRDLEDEEDAKQADGLALSGDEAPEETASPDVERDAVTKE) is disordered. Over residues 1187 to 1196 (DVERDAVTKE) the composition is skewed to basic and acidic residues.

The protein belongs to the RNA polymerase beta chain family. The RNAP catalytic core consists of 2 alpha, 1 beta, 1 beta' and 1 omega subunit. When a sigma factor is associated with the core the holoenzyme is formed, which can initiate transcription.

The catalysed reaction is RNA(n) + a ribonucleoside 5'-triphosphate = RNA(n+1) + diphosphate. Functionally, DNA-dependent RNA polymerase catalyzes the transcription of DNA into RNA using the four ribonucleoside triphosphates as substrates. This is DNA-directed RNA polymerase subunit beta from Bacillus velezensis (strain DSM 23117 / BGSC 10A6 / LMG 26770 / FZB42) (Bacillus amyloliquefaciens subsp. plantarum).